The chain runs to 829 residues: Leucine--tRNA ligase (829 aa).

The 'HIGH' region motif lies at 34 to 44 (PYPSGNIHMGH). Positions 591-595 (KMSKS) match the 'KMSKS' region motif. Lys594 lines the ATP pocket.

This sequence belongs to the class-I aminoacyl-tRNA synthetase family.

The protein resides in the cytoplasm. It carries out the reaction tRNA(Leu) + L-leucine + ATP = L-leucyl-tRNA(Leu) + AMP + diphosphate. The chain is Leucine--tRNA ligase from Ehrlichia chaffeensis (strain ATCC CRL-10679 / Arkansas).